We begin with the raw amino-acid sequence, 370 residues long: Putative F-box protein At3g10430 (370 aa).

In terms of domain architecture, F-box spans 1-47 (MGSSLPFDLILEILQRTPAESLLRFKSTCKKWYELISNDKRFMYKHL).

The sequence is that of Putative F-box protein At3g10430 from Arabidopsis thaliana (Mouse-ear cress).